Here is a 393-residue protein sequence, read N- to C-terminus: Prokineticin receptor 1 (393 aa).

At 1–63 (MEITMGVMDE…NSRTFFAAKI (63 aa)) the chain is on the extracellular side. 3 N-linked (GlcNAc...) asparagine glycosylation sites follow: asparagine 11, asparagine 14, and asparagine 36. The chain crosses the membrane as a helical span at residues 64-84 (VIGMALVGIMLVCGIGNFIFI). Topologically, residues 85-98 (AALARYKKLRNLTN) are cytoplasmic. Residues 99–119 (LLIANLAISDFLVAIVCCPFE) traverse the membrane as a helical segment. Residues 120-145 (MDYYVVRQLSWEHGHVLCASVNYLRT) lie on the Extracellular side of the membrane. A disulfide bond links cysteine 137 and cysteine 217. Residues 146 to 166 (VSLYVSTNALLAIAIDRYLAI) traverse the membrane as a helical segment. Residues 167-179 (VHPLRPRMKYQTA) are Cytoplasmic-facing. Residues 180-200 (TGLIALVWVVSILVAIPSAYF) traverse the membrane as a helical segment. The Extracellular segment spans residues 201–232 (TTETVLVIVKSQEKIFCGQIWPVDQQIYYKSY). Residues 233–253 (FLFIFGIEFVGPVVTMTLCYA) traverse the membrane as a helical segment. The Cytoplasmic segment spans residues 254–282 (RISRELWFKAVPGFQTEQIRKRLRCRRKT). A helical membrane pass occupies residues 283-303 (VLVLMCILTAYVLCWAPFYGF). The Extracellular portion of the chain corresponds to 304-322 (AIVRDFFPTVFVKEKHYLT). Residues 323–343 (AFYVVECIAMSNSMINTVCFV) form a helical membrane-spanning segment. The Cytoplasmic segment spans residues 344–393 (TVKNNTIKYFKKIMLLHWKASYNGSKSSGDLDLKTTGVPATEEVDCIGLK).

This sequence belongs to the G-protein coupled receptor 1 family.

It localises to the cell membrane. Its function is as follows. Receptor for prokineticin 1. Exclusively coupled to the G(q) subclass of heteromeric G proteins. Activation leads to mobilization of calcium, stimulation of phosphoinositide turnover and activation of p44/p42 mitogen-activated protein kinase. May play a role during early pregnancy. The chain is Prokineticin receptor 1 (PROKR1) from Bos taurus (Bovine).